Reading from the N-terminus, the 345-residue chain is Nuclear hormone receptor family nhr-176 (345 aa).

The nuclear receptor DNA-binding region spans 7–82; the sequence is IQPCLVCGQS…AGMLEKMVFS (76 aa). The NR C4-type zinc-finger motif lies at 10–30; it reads CLVCGQSSNSILFGAPSCRAC. The NR C4-type; degenerate zinc-finger motif lies at 46-65; that stretch reads NNCLGECSFAKKSMKPCQSC. In terms of domain architecture, NR LBD spans 92–342; that stretch reads FEKSILEELE…CPLYAISTNS (251 aa). Residues 331 to 342 are AF-2; sequence SGCPLYAISTNS.

It is found in the nucleus. Functionally, nuclear hormone receptor. Binds to xenobiotic ligand thiabendazole (TBZ), in vitro. Involved in the up-regulation of phase I detoxification genes, such as probable cytochrome P450 cyp-35d1, in response to TBZ. This Caenorhabditis elegans protein is Nuclear hormone receptor family nhr-176.